Here is a 227-residue protein sequence, read N- to C-terminus: Transcription elongation factor A protein-like 2 (227 aa).

Disordered regions lie at residues 1–145 and 202–227; these read MEKL…TNKG and FYPRGPREFRGGCRAPRRDTEDIPYV. Composition is skewed to basic and acidic residues over residues 18-43, 50-82, 90-113, 120-136, and 206-227; these read IDNEEQPPHEGKPEVACILEDKKLEN, TGKRVEEPLKDKEKPESAGKAKGEGKSERKGKS, TEGKPERGGRAEGEGEPDSEREPE, SETRAAGKRPAEDDIPR, and GPREFRGGCRAPRRDTEDIPYV.

The protein belongs to the TFS-II family. TFA subfamily.

It localises to the nucleus. Its function is as follows. May be involved in transcriptional regulation. This Homo sapiens (Human) protein is Transcription elongation factor A protein-like 2 (TCEAL2).